We begin with the raw amino-acid sequence, 336 residues long: Nuclear egress protein 2 (336 aa).

Topologically, residues 1–315 are perinuclear space; sequence MASPEERLLD…AWRYSWRATP (315 aa). Disordered regions lie at residues 193 to 221 and 277 to 297; these read RSGQ…GCLG and RTRE…VPPE. Over residues 277 to 288 the composition is skewed to basic residues; sequence RTRETRRMRGSH. A helical transmembrane segment spans residues 316–333; the sequence is YLARVLAVTAVALLLMFL. At 334 to 336 the chain is on the nuclear side; that stretch reads RWT.

It belongs to the herpesviridae NEC2 protein family. As to quaternary structure, forms a heterodimeric viral nuclear egress complex (NEC) with NEC1. Interacts with host IKBKE; this interaction inhibits host IKBKE kinase activity and IRF3 nuclear translocation. In terms of processing, phosphorylated.

The protein localises to the host nucleus inner membrane. It is found in the host cytoplasm. It localises to the host perinuclear region. Plays an essential role in virion nuclear egress, the first step of virion release from infected cell. Within the host nucleus, NEC1 interacts with the newly formed capsid through the vertexes and directs it to the inner nuclear membrane by associating with NEC2. Induces the budding of the capsid at the inner nuclear membrane as well as its envelopment into the perinuclear space. There, the NEC1/NEC2 complex promotes the fusion of the enveloped capsid with the outer nuclear membrane and the subsequent release of the viral capsid into the cytoplasm where it will reach the secondary budding sites in the host Golgi or trans-Golgi network. Inhibits host IKBKE and IRF3, thereby impairing type I IFN signaling. The protein is Nuclear egress protein 2 of Homo sapiens (Human).